Consider the following 298-residue polypeptide: Inosose dehydratase (298 aa).

It belongs to the IolE/MocC family. Glutathione serves as cofactor. Requires Co(2+) as cofactor. Mn(2+) is required as a cofactor.

The enzyme catalyses scyllo-inosose = 3D-3,5/4-trihydroxycyclohexane-1,2-dione + H2O. It participates in polyol metabolism; myo-inositol degradation into acetyl-CoA; acetyl-CoA from myo-inositol: step 2/7. Catalyzes the dehydration of inosose (2-keto-myo-inositol, 2KMI or 2,4,6/3,5-pentahydroxycyclohexanone) to 3D-(3,5/4)-trihydroxycyclohexane-1,2-dione (D-2,3-diketo-4-deoxy-epi-inositol). This is Inosose dehydratase from Bacillus anthracis (strain CDC 684 / NRRL 3495).